Here is a 79-residue protein sequence, read N- to C-terminus: Acyl carrier protein (79 aa).

In terms of domain architecture, Carrier spans 2 to 77 (SDIEERVKKI…SAIDYVNAHK (76 aa)). Residue Ser-37 is modified to O-(pantetheine 4'-phosphoryl)serine.

It belongs to the acyl carrier protein (ACP) family. Post-translationally, 4'-phosphopantetheine is transferred from CoA to a specific serine of apo-ACP by AcpS. This modification is essential for activity because fatty acids are bound in thioester linkage to the sulfhydryl of the prosthetic group.

It is found in the cytoplasm. It participates in lipid metabolism; fatty acid biosynthesis. Functionally, carrier of the growing fatty acid chain in fatty acid biosynthesis. This is Acyl carrier protein from Pseudoalteromonas atlantica (strain T6c / ATCC BAA-1087).